Here is a 513-residue protein sequence, read N- to C-terminus: Histidine ammonia-lyase (513 aa).

Positions 145 to 147 (ASG) form a cross-link, 5-imidazolinone (Ala-Gly). At Ser-146 the chain carries 2,3-didehydroalanine (Ser).

It belongs to the PAL/histidase family. Contains an active site 4-methylidene-imidazol-5-one (MIO), which is formed autocatalytically by cyclization and dehydration of residues Ala-Ser-Gly.

The protein localises to the cytoplasm. The catalysed reaction is L-histidine = trans-urocanate + NH4(+). Its pathway is amino-acid degradation; L-histidine degradation into L-glutamate; N-formimidoyl-L-glutamate from L-histidine: step 1/3. This is Histidine ammonia-lyase from Vibrio vulnificus (strain YJ016).